A 944-amino-acid chain; its full sequence is Isoleucine--tRNA ligase (944 aa).

A 'HIGH' region motif is present at residues P58 to H68. E568 provides a ligand contact to L-isoleucyl-5'-AMP. The short motif at K609–S613 is the 'KMSKS' region element. Position 612 (K612) interacts with ATP. Residues C907, C910, C927, and C930 each contribute to the Zn(2+) site.

This sequence belongs to the class-I aminoacyl-tRNA synthetase family. IleS type 1 subfamily. In terms of assembly, monomer. It depends on Zn(2+) as a cofactor.

It is found in the cytoplasm. It carries out the reaction tRNA(Ile) + L-isoleucine + ATP = L-isoleucyl-tRNA(Ile) + AMP + diphosphate. Catalyzes the attachment of isoleucine to tRNA(Ile). As IleRS can inadvertently accommodate and process structurally similar amino acids such as valine, to avoid such errors it has two additional distinct tRNA(Ile)-dependent editing activities. One activity is designated as 'pretransfer' editing and involves the hydrolysis of activated Val-AMP. The other activity is designated 'posttransfer' editing and involves deacylation of mischarged Val-tRNA(Ile). This is Isoleucine--tRNA ligase from Psychromonas ingrahamii (strain DSM 17664 / CCUG 51855 / 37).